Reading from the N-terminus, the 448-residue chain is Gamma conglutin 2 (448 aa).

Positions 1–33 (MAKNMAQIFPFIAVFLSCSFIFVLSSSQNSQSL) are cleaved as a signal peptide. The Peptidase A1 domain maps to 63-428 (HWANIHKRTP…DLERSRVEFN (366 aa)). Cystine bridges form between cysteine 91–cysteine 181, cysteine 105–cysteine 118, cysteine 110–cysteine 136, cysteine 121–cysteine 131, and cysteine 349–cysteine 390. An N-linked (GlcNAc...) asparagine glycan is attached at asparagine 133.

Belongs to the peptidase A1 family. In terms of assembly, two-subunit monomeric unit made of alpha and beta subunits coupled by disulfide bonds (at pH 4.5 and under non-reducing conditions). Can also form oligomers including dimer, tetramer and cyclic hexamer (trimer of dimers) (at pH &gt; 5.5). Component of globulins complexes which accumulate in seeds. Interacts with flavonoids (e.g. apigenin glucosides) present in globulins complexes. Glycosylated on alpha chain. In terms of tissue distribution, expressed in developing seeds and in the young roots and cotyledons of germinating seeds and young seedlings.

It is found in the secreted. The protein localises to the extracellular space. Sulfur-rich seed storage protein that remains undegraded at germination. This is Gamma conglutin 2 from Lupinus albus (White lupine).